The chain runs to 206 residues: Adenine phosphoribosyltransferase (206 aa).

The protein belongs to the purine/pyrimidine phosphoribosyltransferase family. Homodimer.

It is found in the cytoplasm. It carries out the reaction AMP + diphosphate = 5-phospho-alpha-D-ribose 1-diphosphate + adenine. The protein operates within purine metabolism; AMP biosynthesis via salvage pathway; AMP from adenine: step 1/1. Functionally, catalyzes a salvage reaction resulting in the formation of AMP, that is energically less costly than de novo synthesis. The chain is Adenine phosphoribosyltransferase from Burkholderia mallei (strain NCTC 10229).